Reading from the N-terminus, the 252-residue chain is 2-succinyl-6-hydroxy-2,4-cyclohexadiene-1-carboxylate synthase (252 aa).

This sequence belongs to the AB hydrolase superfamily. MenH family. Monomer.

The enzyme catalyses 5-enolpyruvoyl-6-hydroxy-2-succinyl-cyclohex-3-ene-1-carboxylate = (1R,6R)-6-hydroxy-2-succinyl-cyclohexa-2,4-diene-1-carboxylate + pyruvate. It functions in the pathway quinol/quinone metabolism; 1,4-dihydroxy-2-naphthoate biosynthesis; 1,4-dihydroxy-2-naphthoate from chorismate: step 3/7. It participates in quinol/quinone metabolism; menaquinone biosynthesis. In terms of biological role, catalyzes a proton abstraction reaction that results in 2,5-elimination of pyruvate from 2-succinyl-5-enolpyruvyl-6-hydroxy-3-cyclohexene-1-carboxylate (SEPHCHC) and the formation of 2-succinyl-6-hydroxy-2,4-cyclohexadiene-1-carboxylate (SHCHC). This chain is 2-succinyl-6-hydroxy-2,4-cyclohexadiene-1-carboxylate synthase, found in Klebsiella pneumoniae (strain 342).